The primary structure comprises 219 residues: 3-demethoxyubiquinol 3-hydroxylase (219 aa).

Residues 21-51 form a disordered region; it reads RTLTPGTTQAERTPAHAAPAPDAPEAGTLPS. Positions 35–46 are enriched in low complexity; sequence AHAAPAPDAPEA. Fe cation contacts are provided by Glu-68, Glu-98, His-101, Glu-150, Glu-182, and His-185.

Belongs to the COQ7 family. It depends on Fe cation as a cofactor.

The protein resides in the cell membrane. It catalyses the reaction a 5-methoxy-2-methyl-3-(all-trans-polyprenyl)benzene-1,4-diol + AH2 + O2 = a 3-demethylubiquinol + A + H2O. The protein operates within cofactor biosynthesis; ubiquinone biosynthesis. Its function is as follows. Catalyzes the hydroxylation of 2-nonaprenyl-3-methyl-6-methoxy-1,4-benzoquinol during ubiquinone biosynthesis. The polypeptide is 3-demethoxyubiquinol 3-hydroxylase (Alcanivorax borkumensis (strain ATCC 700651 / DSM 11573 / NCIMB 13689 / SK2)).